A 121-amino-acid chain; its full sequence is Large ribosomal subunit protein bL19 (121 aa).

Belongs to the bacterial ribosomal protein bL19 family.

In terms of biological role, this protein is located at the 30S-50S ribosomal subunit interface and may play a role in the structure and function of the aminoacyl-tRNA binding site. This Chlamydia muridarum (strain MoPn / Nigg) protein is Large ribosomal subunit protein bL19 (rplS).